Here is a 199-residue protein sequence, read N- to C-terminus: MSKPQNPVQMAVIGAAHGIKGELRVKTFTGEPMALADYGPLYARDGRAFQITDIRPANTVVVVRFKGISDRNAAEALAGTELFVDRSMLPDDGEEDEFYHADLVGLEVRDDTGTALGKVVAVHNFGGGDILDVTLAGRKGVLIPFTQAAVPDVSVAEGFVRVDPVAAGLVEDEDGDAPREEDFDPKGRPRGPRDAGGNR.

The region spanning 95–168 (EDEFYHADLV…FVRVDPVAAG (74 aa)) is the PRC barrel domain. A disordered region spans residues 167 to 199 (AGLVEDEDGDAPREEDFDPKGRPRGPRDAGGNR). Residues 176 to 193 (DAPREEDFDPKGRPRGPR) are compositionally biased toward basic and acidic residues.

Belongs to the RimM family. In terms of assembly, binds ribosomal protein uS19.

Its subcellular location is the cytoplasm. Functionally, an accessory protein needed during the final step in the assembly of 30S ribosomal subunit, possibly for assembly of the head region. Essential for efficient processing of 16S rRNA. May be needed both before and after RbfA during the maturation of 16S rRNA. It has affinity for free ribosomal 30S subunits but not for 70S ribosomes. This chain is Ribosome maturation factor RimM, found in Mesorhizobium japonicum (strain LMG 29417 / CECT 9101 / MAFF 303099) (Mesorhizobium loti (strain MAFF 303099)).